Consider the following 217-residue polypeptide: Pyridoxine/pyridoxamine 5'-phosphate oxidase (217 aa).

Substrate is bound by residues 13–16 and K71; that span reads RREY. Residues 66-71, 81-82, R87, K88, and Q110 each bind FMN; these read RIVLLK and YT. Substrate is bound by residues Y128, R132, and S136. Residues 145–146 and W190 each bind FMN; that span reads QS. 196 to 198 provides a ligand contact to substrate; it reads RLH. R200 is an FMN binding site.

Belongs to the pyridoxamine 5'-phosphate oxidase family. As to quaternary structure, homodimer. The cofactor is FMN.

It catalyses the reaction pyridoxamine 5'-phosphate + O2 + H2O = pyridoxal 5'-phosphate + H2O2 + NH4(+). The enzyme catalyses pyridoxine 5'-phosphate + O2 = pyridoxal 5'-phosphate + H2O2. It participates in cofactor metabolism; pyridoxal 5'-phosphate salvage; pyridoxal 5'-phosphate from pyridoxamine 5'-phosphate: step 1/1. Its pathway is cofactor metabolism; pyridoxal 5'-phosphate salvage; pyridoxal 5'-phosphate from pyridoxine 5'-phosphate: step 1/1. Catalyzes the oxidation of either pyridoxine 5'-phosphate (PNP) or pyridoxamine 5'-phosphate (PMP) into pyridoxal 5'-phosphate (PLP). The protein is Pyridoxine/pyridoxamine 5'-phosphate oxidase of Serratia proteamaculans (strain 568).